Consider the following 437-residue polypeptide: Trigger factor (437 aa).

The 86-residue stretch at 163-248 (GDRVIIDFEG…LNNVSEPTLP (86 aa)) folds into the PPIase FKBP-type domain.

This sequence belongs to the FKBP-type PPIase family. Tig subfamily.

Its subcellular location is the cytoplasm. The enzyme catalyses [protein]-peptidylproline (omega=180) = [protein]-peptidylproline (omega=0). Functionally, involved in protein export. Acts as a chaperone by maintaining the newly synthesized protein in an open conformation. Functions as a peptidyl-prolyl cis-trans isomerase. The polypeptide is Trigger factor (Neisseria gonorrhoeae (strain NCCP11945)).